A 351-amino-acid polypeptide reads, in one-letter code: Biotin synthase (351 aa).

One can recognise a Radical SAM core domain in the interval 58–285; it reads NTVQLSTLLS…RAMVRLSAGR (228 aa). The [4Fe-4S] cluster site is built by Cys73, Cys77, and Cys80. Positions 117, 148, 208, and 280 each coordinate [2Fe-2S] cluster.

It belongs to the radical SAM superfamily. Biotin synthase family. As to quaternary structure, homodimer. Requires [4Fe-4S] cluster as cofactor. The cofactor is [2Fe-2S] cluster.

The catalysed reaction is (4R,5S)-dethiobiotin + (sulfur carrier)-SH + 2 reduced [2Fe-2S]-[ferredoxin] + 2 S-adenosyl-L-methionine = (sulfur carrier)-H + biotin + 2 5'-deoxyadenosine + 2 L-methionine + 2 oxidized [2Fe-2S]-[ferredoxin]. Its pathway is cofactor biosynthesis; biotin biosynthesis; biotin from 7,8-diaminononanoate: step 2/2. Catalyzes the conversion of dethiobiotin (DTB) to biotin by the insertion of a sulfur atom into dethiobiotin via a radical-based mechanism. This chain is Biotin synthase, found in Paraburkholderia phymatum (strain DSM 17167 / CIP 108236 / LMG 21445 / STM815) (Burkholderia phymatum).